Here is a 606-residue protein sequence, read N- to C-terminus: Neutral/alkaline invertase 3, chloroplastic (606 aa).

A chloroplast-targeting transit peptide spans 1–58 (MGIAEVALHSMPGAFAAHSPASNLPLAADAARGRRRRSANSLHSSRALQGPVRFPGLR). Positions 97–126 (RVPGQAVGGNGSVNGSAAKPPPQRRKASSV) are disordered.

The protein belongs to the glycosyl hydrolase 100 family.

The protein resides in the plastid. Its subcellular location is the chloroplast. The catalysed reaction is Hydrolysis of terminal non-reducing beta-D-fructofuranoside residues in beta-D-fructofuranosides.. Mitochondrial invertase that cleaves sucrose into glucose and fructose. The sequence is that of Neutral/alkaline invertase 3, chloroplastic from Oryza sativa subsp. japonica (Rice).